Here is a 220-residue protein sequence, read N- to C-terminus: Protein-L-isoaspartate O-methyltransferase (220 aa).

Ser67 is an active-site residue.

It belongs to the methyltransferase superfamily. L-isoaspartyl/D-aspartyl protein methyltransferase family.

Its subcellular location is the cytoplasm. It carries out the reaction [protein]-L-isoaspartate + S-adenosyl-L-methionine = [protein]-L-isoaspartate alpha-methyl ester + S-adenosyl-L-homocysteine. Its function is as follows. Catalyzes the methyl esterification of L-isoaspartyl residues in peptides and proteins that result from spontaneous decomposition of normal L-aspartyl and L-asparaginyl residues. It plays a role in the repair and/or degradation of damaged proteins. The protein is Protein-L-isoaspartate O-methyltransferase of Chlorobium phaeobacteroides (strain BS1).